The primary structure comprises 63 residues: Large ribosomal subunit protein bL28 (63 aa).

It belongs to the bacterial ribosomal protein bL28 family.

The protein is Large ribosomal subunit protein bL28 of Sulfurihydrogenibium sp. (strain YO3AOP1).